Consider the following 82-residue polypeptide: RNA-binding protein BPUM_0095 (82 aa).

Belongs to the eukaryotic ribosomal protein eL8 family.

In Bacillus pumilus (strain SAFR-032), this protein is RNA-binding protein BPUM_0095.